Reading from the N-terminus, the 397-residue chain is 2-aminoadipate transaminase (397 aa).

Gly-40 serves as a coordination point for substrate. Residues Tyr-70, 100-101 (SQ), Asn-174, 202-205 (DDAY), 235-237 (SFS), and Arg-245 each bind pyridoxal 5'-phosphate. Asn-174 provides a ligand contact to substrate. Lys-263 carries the N6-(pyridoxal phosphate)lysine modification. Arg-368 is a binding site for substrate.

Belongs to the class-I pyridoxal-phosphate-dependent aminotransferase family. In terms of assembly, homodimer. Pyridoxal 5'-phosphate serves as cofactor.

The enzyme catalyses L-2-aminoadipate + 2-oxoglutarate = 2-oxoadipate + L-glutamate. It functions in the pathway amino-acid biosynthesis; L-lysine biosynthesis via AAA pathway; L-alpha-aminoadipate from 2-oxoglutarate: step 5/5. Catalyzes the transfer of an amino group between 2-oxoadipate (2-OA) and glutamate (Glu) to yield alpha-aminodipate (AAA). It can also transaminate glutamate, leucine, and aromatic amino acids. It also contributes in the biosynthesis of other amino acids such as leucine. The protein is 2-aminoadipate transaminase (lysN) of Thermus thermophilus (strain ATCC BAA-163 / DSM 7039 / HB27).